Reading from the N-terminus, the 510-residue chain is NAD(P)H-quinone oxidoreductase subunit 2 B, chloroplastic (510 aa).

13 consecutive transmembrane segments (helical) span residues 24–44 (LLLFHGSFIFPECILIFGLIL), 57–77 (IPWLYFISSTSLVMSITALLF), 99–119 (IFQFLILLCSTLCIPLSVEYI), 124–144 (MAITEFLLFVLTATLGGMFLC), 150–170 (ITIFVAPECFSLCSYLLSGYT), 183–203 (YLLMGGASSSILVHGFSWLYG), 227–247 (PGISIALISITVGIGFKLSPA), 295–315 (WHLLLEILAILSMILGNLIAI), 323–343 (MLAYSSIGQIGYVIIGIIVGD), 347–367 (GYASMITYMLFYISMNLGTFA), 395–415 (ALSSALCLLSLGGLPPLAGFF), 418–438 (LHLFWCGWQAGLYFLVSIGLL), and 484–504 (MIVCVIASTIPGISMNPIIAI).

The protein belongs to the complex I subunit 2 family. In terms of assembly, NDH is composed of at least 16 different subunits, 5 of which are encoded in the nucleus.

It localises to the plastid. The protein localises to the chloroplast thylakoid membrane. It carries out the reaction a plastoquinone + NADH + (n+1) H(+)(in) = a plastoquinol + NAD(+) + n H(+)(out). The enzyme catalyses a plastoquinone + NADPH + (n+1) H(+)(in) = a plastoquinol + NADP(+) + n H(+)(out). Functionally, NDH shuttles electrons from NAD(P)H:plastoquinone, via FMN and iron-sulfur (Fe-S) centers, to quinones in the photosynthetic chain and possibly in a chloroplast respiratory chain. The immediate electron acceptor for the enzyme in this species is believed to be plastoquinone. Couples the redox reaction to proton translocation, and thus conserves the redox energy in a proton gradient. This Chloranthus spicatus (Chulantree) protein is NAD(P)H-quinone oxidoreductase subunit 2 B, chloroplastic.